The sequence spans 860 residues: Leucine--tRNA ligase (860 aa).

Residues 42–52 carry the 'HIGH' region motif; that stretch reads PYPSGRLHMGH. The 'KMSKS' region motif lies at 619–623; it reads KMSKS. Lys622 serves as a coordination point for ATP.

The protein belongs to the class-I aminoacyl-tRNA synthetase family.

It localises to the cytoplasm. The enzyme catalyses tRNA(Leu) + L-leucine + ATP = L-leucyl-tRNA(Leu) + AMP + diphosphate. This chain is Leucine--tRNA ligase, found in Escherichia coli O157:H7.